The sequence spans 799 residues: Dipeptidyl peptidase family member 1 (799 aa).

Residues 1–31 (MTAEADLLEGYDEELGGNESQKRDCKGITTA) lie on the Cytoplasmic side of the membrane. Residues 32–52 (IVVVLLILVMIFAALVFFTPL) form a helical; Signal-anchor for type II membrane protein membrane-spanning segment. Residues 53-799 (FAAKSFGSWR…FLRQCFYTDK (747 aa)) are Lumenal-facing. 4 N-linked (GlcNAc...) asparagine glycosylation sites follow: Asn-64, Asn-138, Asn-267, and Asn-335. Cysteines 474 and 477 form a disulfide. A glycan (N-linked (GlcNAc...) asparagine) is linked at Asn-481. An intrachain disulfide couples Cys-482 to Cys-500. An N-linked (GlcNAc...) asparagine glycan is attached at Asn-512. Catalysis depends on charge relay system residues Ser-669, Asp-742, and His-774. Cys-689 and Cys-794 are disulfide-bonded.

Belongs to the peptidase S9B family. DPPIV subfamily.

It is found in the cell membrane. Functionally, removes N-terminal dipeptides sequentially from polypeptides. Essential for control of distal tip cell migration. This chain is Dipeptidyl peptidase family member 1 (dpf-1), found in Caenorhabditis elegans.